We begin with the raw amino-acid sequence, 155 residues long: Ribosome maturation factor RimP (155 aa).

Belongs to the RimP family.

It is found in the cytoplasm. Its function is as follows. Required for maturation of 30S ribosomal subunits. The protein is Ribosome maturation factor RimP of Phocaeicola vulgatus (strain ATCC 8482 / DSM 1447 / JCM 5826 / CCUG 4940 / NBRC 14291 / NCTC 11154) (Bacteroides vulgatus).